The chain runs to 180 residues: Ribulose bisphosphate carboxylase small subunit, chloroplastic 4 (180 aa).

A chloroplast-targeting transit peptide spans 1-56 (MASSIVSSAAVATRGNGAQASMVAPFTGLKSTASFPVSRKQNLDITSIASNGGRVS).

It belongs to the RuBisCO small chain family. Heterohexadecamer of 8 large and 8 small subunits. In terms of assembly, (Microbial infection) Binds to tobamovirus movement protein; this interaction seems required for viral systemic movement.

Its subcellular location is the plastid. It localises to the chloroplast. The protein resides in the cell junction. The protein localises to the plasmodesma. In terms of biological role, ruBisCO catalyzes two reactions: the carboxylation of D-ribulose 1,5-bisphosphate, the primary event in carbon dioxide fixation, as well as the oxidative fragmentation of the pentose substrate. Both reactions occur simultaneously and in competition at the same active site. Although the small subunit is not catalytic it is essential for maximal activity. Involved in antiviral defenses. The protein is Ribulose bisphosphate carboxylase small subunit, chloroplastic 4 of Solanum lycopersicum (Tomato).